Here is a 343-residue protein sequence, read N- to C-terminus: Phenylalanine--tRNA ligase alpha subunit (343 aa).

A Mg(2+)-binding site is contributed by E256.

The protein belongs to the class-II aminoacyl-tRNA synthetase family. Phe-tRNA synthetase alpha subunit type 1 subfamily. As to quaternary structure, tetramer of two alpha and two beta subunits. The cofactor is Mg(2+).

It is found in the cytoplasm. The enzyme catalyses tRNA(Phe) + L-phenylalanine + ATP = L-phenylalanyl-tRNA(Phe) + AMP + diphosphate + H(+). This Phytoplasma australiense protein is Phenylalanine--tRNA ligase alpha subunit.